The sequence spans 137 residues: 2-iminobutanoate/2-iminopropanoate deaminase (137 aa).

Ser-2 carries the N-acetylserine modification. N6-succinyllysine occurs at positions 13 and 67. Position 74 is a phosphothreonine (Thr-74). Phosphoserine is present on Ser-136.

Belongs to the RutC family. In terms of assembly, homotrimer. Interacts with YTHDF2.

It is found in the cytoplasm. It localises to the nucleus. The protein localises to the peroxisome. Its subcellular location is the mitochondrion. It catalyses the reaction 2-iminobutanoate + H2O = 2-oxobutanoate + NH4(+). The catalysed reaction is 2-iminopropanoate + H2O = pyruvate + NH4(+). Its function is as follows. Catalyzes the hydrolytic deamination of enamine/imine intermediates that form during the course of normal metabolism. May facilitate the release of ammonia from these potentially toxic reactive metabolites, reducing their impact on cellular components. It may act on enamine/imine intermediates formed by several types of pyridoxal-5'-phosphate-dependent dehydratases including L-threonine dehydratase. Also promotes endoribonucleolytic cleavage of some transcripts by promoting recruitment of the ribonuclease P/MRP complex. Acts by bridging YTHDF2 and the ribonuclease P/MRP complex. RIDA/HRSP12 binds to N6-methyladenosine (m6A)-containing mRNAs containing a 5'-GGUUC-3' motif: cooperative binding of RIDA/HRSP12 and YTHDF2 to such transcripts lead to recruitment of the ribonuclease P/MRP complex and subsequent endoribonucleolytic cleavage. This is 2-iminobutanoate/2-iminopropanoate deaminase from Bos taurus (Bovine).